The primary structure comprises 154 residues: Large-conductance mechanosensitive channel (154 aa).

The next 3 helical transmembrane spans lie at 16 to 36 (VLGL…ISSV), 39 to 59 (DLLM…GFFI), and 89 to 109 (GQFL…FMIM).

The protein belongs to the MscL family. As to quaternary structure, homopentamer.

It localises to the cell inner membrane. Functionally, channel that opens in response to stretch forces in the membrane lipid bilayer. May participate in the regulation of osmotic pressure changes within the cell. The sequence is that of Large-conductance mechanosensitive channel from Zymomonas mobilis subsp. mobilis (strain ATCC 31821 / ZM4 / CP4).